Reading from the N-terminus, the 406-residue chain is Arginine decarboxylase (406 aa).

Lys8 carries the post-translational modification N6-(pyridoxal phosphate)lysine. Substrate is bound at residue 192–202 (VDFGGGLGIDY).

Belongs to the Orn/Lys/Arg decarboxylase class-II family. SpeA subfamily. It depends on pyridoxal 5'-phosphate as a cofactor. Mg(2+) serves as cofactor.

It catalyses the reaction L-arginine + H(+) = agmatine + CO2. Its pathway is amine and polyamine biosynthesis; agmatine biosynthesis; agmatine from L-arginine: step 1/1. This is Arginine decarboxylase (SPE2) from Theobroma cacao (Cacao).